Reading from the N-terminus, the 178-residue chain is CASP-like protein 2A2 (178 aa).

The Cytoplasmic segment spans residues 1–22; that stretch reads MDKTDQTAIDGSALELNRTEKT. Residues 23-43 traverse the membrane as a helical segment; it reads VEAVLRVASMALSITGLVIMI. At 44 to 69 the chain is on the extracellular side; it reads KNSISNDFGSLSYSNLGAFMYLVGAN. Residues 70–90 form a helical membrane-spanning segment; that stretch reads GVCAAYSLLSALAILALPCPI. Over 91-96 the chain is Cytoplasmic; it reads SKVQVR. The helical transmembrane segment at 97–117 threads the bilayer; that stretch reads TLFLLDQVVTYVVLAAGAVSA. Over 118-145 the chain is Extracellular; it reads ETVYLAYYGNIPITWSSACDSYGIFCHK. The chain crosses the membrane as a helical span at residues 146–166; sequence ALISVVFTFVVSLLYMLLSLI. The Cytoplasmic segment spans residues 167–178; it reads SSYRLFSRFEAP.

The protein belongs to the Casparian strip membrane proteins (CASP) family. As to quaternary structure, homodimer and heterodimers.

The protein resides in the cell membrane. This chain is CASP-like protein 2A2, found in Arabidopsis lyrata subsp. lyrata (Lyre-leaved rock-cress).